The primary structure comprises 418 residues: Gamma-glutamyl phosphate reductase (418 aa).

This sequence belongs to the gamma-glutamyl phosphate reductase family.

It localises to the cytoplasm. It carries out the reaction L-glutamate 5-semialdehyde + phosphate + NADP(+) = L-glutamyl 5-phosphate + NADPH + H(+). It functions in the pathway amino-acid biosynthesis; L-proline biosynthesis; L-glutamate 5-semialdehyde from L-glutamate: step 2/2. Catalyzes the NADPH-dependent reduction of L-glutamate 5-phosphate into L-glutamate 5-semialdehyde and phosphate. The product spontaneously undergoes cyclization to form 1-pyrroline-5-carboxylate. The protein is Gamma-glutamyl phosphate reductase of Marinobacter nauticus (strain ATCC 700491 / DSM 11845 / VT8) (Marinobacter aquaeolei).